We begin with the raw amino-acid sequence, 441 residues long: Chromosomal replication initiator protein DnaA (441 aa).

The tract at residues 1 to 71 is domain I, interacts with DnaA modulators; the sequence is MDIRWEEILE…AVYQVVGDRF (71 aa). A domain II region spans residues 71-99; that stretch reads FKVSILTESETSSHVLKEVIQSKFDDSDS. The tract at residues 100-318 is domain III, AAA+ region; it reads DLNPEYIFSN…GIVNDLVMYK (219 aa). ATP contacts are provided by G143, G145, K146, and T147. The tract at residues 319 to 441 is domain IV, binds dsDNA; sequence KAYEYFLLTE…HTIKHKISFQ (123 aa).

Belongs to the DnaA family. In terms of assembly, oligomerizes as a right-handed, spiral filament on DNA at oriC.

Its subcellular location is the cytoplasm. Functionally, plays an essential role in the initiation and regulation of chromosomal replication. ATP-DnaA binds to the origin of replication (oriC) to initiate formation of the DNA replication initiation complex once per cell cycle. Binds the DnaA box (a 9 base pair repeat at the origin) and separates the double-stranded (ds)DNA. Forms a right-handed helical filament on oriC DNA; dsDNA binds to the exterior of the filament while single-stranded (ss)DNA is stabiized in the filament's interior. The ATP-DnaA-oriC complex binds and stabilizes one strand of the AT-rich DNA unwinding element (DUE), permitting loading of DNA polymerase. After initiation quickly degrades to an ADP-DnaA complex that is not apt for DNA replication. Binds acidic phospholipids. This chain is Chromosomal replication initiator protein DnaA, found in Leptospira biflexa serovar Patoc (strain Patoc 1 / Ames).